The primary structure comprises 155 residues: Aspartate carbamoyltransferase regulatory chain (155 aa).

4 residues coordinate Zn(2+): Cys-113, Cys-118, Cys-141, and Cys-144.

Belongs to the PyrI family. As to quaternary structure, contains catalytic and regulatory chains. The cofactor is Zn(2+).

Functionally, involved in allosteric regulation of aspartate carbamoyltransferase. The protein is Aspartate carbamoyltransferase regulatory chain of Methanococcus aeolicus (strain ATCC BAA-1280 / DSM 17508 / OCM 812 / Nankai-3).